We begin with the raw amino-acid sequence, 107 residues long: Thioredoxin 1 (107 aa).

Residues 2–107 (SAAAQVTDST…TLSQTLEKHL (106 aa)) enclose the Thioredoxin domain. A disulfide bridge links cysteine 32 with cysteine 35.

It belongs to the thioredoxin family.

Its function is as follows. Participates in various redox reactions through the reversible oxidation of its active center dithiol to a disulfide and catalyzes dithiol-disulfide exchange reactions. The polypeptide is Thioredoxin 1 (trxA) (Nostoc sp. (strain PCC 7120 / SAG 25.82 / UTEX 2576)).